The primary structure comprises 559 residues: uncharacterized protein (559 aa).

Disordered regions lie at residues 315 to 360 and 454 to 559; these read TDDA…ERDI and DKID…STEN. Polar residues predominate over residues 320 to 329; the sequence is NENSDNSMNT. Positions 348–357 are enriched in acidic residues; that stretch reads DNNDDSDDSE. A coiled-coil region spans residues 433 to 495; sequence ELKIQEMEKI…KRRQKRSQRS (63 aa). A compositionally biased stretch (basic and acidic residues) spans 454–501; the sequence is DKIDMDQIKSEMSRRRDESNKRRDEKRKDREEKRRQKRSQRSDTRKQG. Over residues 507 to 527 the composition is skewed to low complexity; that stretch reads SDEATSDQTQSTDSNNTTQTA.

Its subcellular location is the virion. This is an uncharacterized protein from Acanthamoeba polyphaga mimivirus (APMV).